We begin with the raw amino-acid sequence, 299 residues long: Quinolinate synthase (299 aa).

Iminosuccinate is bound by residues His21 and Ser38. A [4Fe-4S] cluster-binding site is contributed by Cys83. Iminosuccinate is bound by residues 109–111 (YVN) and Ser126. Position 170 (Cys170) interacts with [4Fe-4S] cluster. Residues 196-198 (HPE) and Thr213 contribute to the iminosuccinate site. [4Fe-4S] cluster is bound at residue Cys256.

Belongs to the quinolinate synthase family. Type 2 subfamily. [4Fe-4S] cluster is required as a cofactor.

Its subcellular location is the cytoplasm. The enzyme catalyses iminosuccinate + dihydroxyacetone phosphate = quinolinate + phosphate + 2 H2O + H(+). Its pathway is cofactor biosynthesis; NAD(+) biosynthesis; quinolinate from iminoaspartate: step 1/1. Functionally, catalyzes the condensation of iminoaspartate with dihydroxyacetone phosphate to form quinolinate. This Pyrococcus abyssi (strain GE5 / Orsay) protein is Quinolinate synthase.